The sequence spans 172 residues: Large ribosomal subunit protein uL10 (172 aa).

This sequence belongs to the universal ribosomal protein uL10 family. As to quaternary structure, part of the ribosomal stalk of the 50S ribosomal subunit. The N-terminus interacts with L11 and the large rRNA to form the base of the stalk. The C-terminus forms an elongated spine to which L12 dimers bind in a sequential fashion forming a multimeric L10(L12)X complex.

In terms of biological role, forms part of the ribosomal stalk, playing a central role in the interaction of the ribosome with GTP-bound translation factors. The protein is Large ribosomal subunit protein uL10 of Bartonella tribocorum (strain CIP 105476 / IBS 506).